Consider the following 154-residue polypeptide: Large ribosomal subunit protein uL23 (154 aa).

It belongs to the universal ribosomal protein uL23 family.

Its function is as follows. This protein binds to a specific region on the 26S rRNA. This is Large ribosomal subunit protein uL23 (RPL23A) from Fritillaria agrestis (Stinkbells).